A 348-amino-acid chain; its full sequence is Dihydroorotate dehydrogenase (quinone) (348 aa).

Residues 60 to 64 (AGFDK) and Thr84 contribute to the FMN site. Lys64 contributes to the substrate binding site. 109–113 (NRLGF) is a substrate binding site. FMN is bound by residues Asn138 and Asn169. Asn169 serves as a coordination point for substrate. Catalysis depends on Ser172, which acts as the Nucleophile. A substrate-binding site is contributed by Asn174. The FMN site is built by Lys207 and Ser235. 236–237 (NT) provides a ligand contact to substrate. Residues Gly258, Gly287, and 308–309 (YS) each bind FMN.

This sequence belongs to the dihydroorotate dehydrogenase family. Type 2 subfamily. As to quaternary structure, monomer. Requires FMN as cofactor.

Its subcellular location is the cell membrane. The catalysed reaction is (S)-dihydroorotate + a quinone = orotate + a quinol. It participates in pyrimidine metabolism; UMP biosynthesis via de novo pathway; orotate from (S)-dihydroorotate (quinone route): step 1/1. In terms of biological role, catalyzes the conversion of dihydroorotate to orotate with quinone as electron acceptor. This chain is Dihydroorotate dehydrogenase (quinone), found in Parvibaculum lavamentivorans (strain DS-1 / DSM 13023 / NCIMB 13966).